The following is a 164-amino-acid chain: Phosphopantetheine adenylyltransferase (164 aa).

Serine 9 contacts substrate. Residues 9 to 10 and histidine 17 contribute to the ATP site; that span reads SF. Residues lysine 41, leucine 73, and lysine 87 each coordinate substrate. Residues 88 to 90, glutamate 98, and 123 to 129 contribute to the ATP site; these read GLR and YSYLSSS.

The protein belongs to the bacterial CoaD family. In terms of assembly, homohexamer. Mg(2+) serves as cofactor.

Its subcellular location is the cytoplasm. It carries out the reaction (R)-4'-phosphopantetheine + ATP + H(+) = 3'-dephospho-CoA + diphosphate. The protein operates within cofactor biosynthesis; coenzyme A biosynthesis; CoA from (R)-pantothenate: step 4/5. In terms of biological role, reversibly transfers an adenylyl group from ATP to 4'-phosphopantetheine, yielding dephospho-CoA (dPCoA) and pyrophosphate. This is Phosphopantetheine adenylyltransferase from Clostridium botulinum (strain Okra / Type B1).